The following is a 567-amino-acid chain: Potassium-transporting ATPase potassium-binding subunit (567 aa).

The next 12 membrane-spanning stretches (helical) occupy residues 11 to 31 (LYLL…AALL), 67 to 87 (AAAI…LQRW), 136 to 156 (GLAV…VALV), 179 to 199 (LWLL…QGVV), 255 to 275 (FSNW…VVMF), 286 to 306 (VVLL…VYLA), 333 to 353 (FGVL…CGAV), 363 to 383 (LGGG…GGVG), 385 to 405 (GLYG…LMIG), 422 to 442 (LVSV…AIAV), 489 to 509 (LMLA…VLAL), and 532 to 552 (LFVV…YIPA).

The protein belongs to the KdpA family. The system is composed of three essential subunits: KdpA, KdpB and KdpC.

It localises to the cell inner membrane. In terms of biological role, part of the high-affinity ATP-driven potassium transport (or Kdp) system, which catalyzes the hydrolysis of ATP coupled with the electrogenic transport of potassium into the cytoplasm. This subunit binds the periplasmic potassium ions and delivers the ions to the membrane domain of KdpB through an intramembrane tunnel. This is Potassium-transporting ATPase potassium-binding subunit from Laribacter hongkongensis (strain HLHK9).